Reading from the N-terminus, the 258-residue chain is Small ribosomal subunit protein uS2 (258 aa).

Positions 226–258 (AQNKDVEPVADKDEKPEAAPVDEAETATETTGE) are disordered. Over residues 229–242 (KDVEPVADKDEKPE) the composition is skewed to basic and acidic residues. Over residues 245–258 (PVDEAETATETTGE) the composition is skewed to acidic residues.

This sequence belongs to the universal ribosomal protein uS2 family.

The polypeptide is Small ribosomal subunit protein uS2 (Solidesulfovibrio magneticus (strain ATCC 700980 / DSM 13731 / RS-1) (Desulfovibrio magneticus)).